A 461-amino-acid polypeptide reads, in one-letter code: Steroidogenic factor 1 (461 aa).

Positions 10-85 form a DNA-binding region, nuclear receptor; sequence DELCPVCGDK…VGMRLEAVRA (76 aa). The NR C4-type zinc-finger motif lies at 13-33; that stretch reads CPVCGDKVSGYHYGLLTCESC. Lysine 34, lysine 38, and lysine 72 each carry N6-acetyllysine. The segment at 49 to 73 adopts an NR C4-type zinc-finger fold; it reads CTESQSCKIDKTQRKRCPFCRFQKC. Residue lysine 119 forms a Glycyl lysine isopeptide (Lys-Gly) (interchain with G-Cter in SUMO) linkage. Positions 119–157 are disordered; sequence KLETGPPMGVPPPPPPAPDYVLPPSLHGPEPKGLAAGPP. Positions 126–136 are enriched in pro residues; it reads MGVPPPPPPAP. Residue lysine 194 forms a Glycyl lysine isopeptide (Lys-Gly) (interchain with G-Cter in SUMO) linkage. The residue at position 203 (serine 203) is a Phosphoserine; by CDK7. The region spanning 222–459 is the NR LBD domain; that stretch reads NVPELILQLL…NLLIEMLQAK (238 aa). The interval 230–461 is important for dimerization; it reads LLQLEPDEDQ…LIEMLQAKQT (232 aa). Positions 341, 436, and 440 each coordinate a 1,2-diacyl-sn-glycero-3-phosphocholine. A 1,2-diacylglycero-3-phosphoethanolamine contacts are provided by glycine 341, tyrosine 436, and lysine 440.

This sequence belongs to the nuclear hormone receptor family. NR5 subfamily. As to quaternary structure, binds DNA as a monomer. Interacts with NR0B2 and PPARGC1A. Part of a complex consisting of SFPQ, NONO and NR5A1. Interacts with NCOA2. Interacts with DGKQ and CDK7. Binds to and activated by HIPK3. Post-translationally, acetylation stimulates the transcriptional activity. Sumoylation reduces CDK7-mediated phosphorylation on Ser-203. In terms of processing, phosphorylated on Ser-203 by CDK7. This phosphorylation promotes transcriptional activity. In terms of tissue distribution, high expressed in the adrenal cortex, the ovary, the testis, and the spleen.

It localises to the nucleus. Functionally, transcriptional activator. Essential for sexual differentiation and formation of the primary steroidogenic tissues. Binds to the Ad4 site found in the promoter region of steroidogenic P450 genes such as CYP11A, CYP11B and CYP21B. Also regulates the AMH/Muellerian inhibiting substance gene as well as the AHCH and STAR genes. 5'-YCAAGGYC-3' and 5'-RRAGGTCA-3' are the consensus sequences for the recognition by NR5A1. The SFPQ-NONO-NR5A1 complex binds to the CYP17 promoter and regulates basal and cAMP-dependent transcriptional activity. Binds phosphatidylcholine. Binds phospholipids with a phosphatidylinositol (PI) headgroup, in particular PI(3,4)P2 and PI(3,4,5)P3. Activated by the phosphorylation of NR5A1 by HIPK3 leading to increased steroidogenic gene expression upon cAMP signaling pathway stimulation. The sequence is that of Steroidogenic factor 1 (NR5A1) from Homo sapiens (Human).